The following is a 1294-amino-acid chain: Unconventional myosin-VI (1294 aa).

A Myosin N-terminal SH3-like domain is found at 2–53 (EDGKPVWAPHPTDGFQMGNIVDIGPDSLTIEPLNQKGKTFLALINQVFPAEE). In terms of domain architecture, Myosin motor spans 57-771 (KDVEDNCSLM…KFAEFDQIMK (715 aa)). Residue 151-158 (GESGAGKT) coordinates ATP. Phosphoserine is present on S267. Residues 273 to 317 (YLNRGCTRYFANKETDKQILQNRKSPEYLKAGSMKDPLLDDHGDF) are responsible for slow ATPase activity. T405 carries the phosphothreonine modification. Residue S604 is modified to Phosphoserine. The tract at residues 665–672 (FIRCIKPN) is actin-binding. Residues 782–810 (KRVNHWLTCSRWKKVQWCSLSVIKLKNKI) form a required for binding calmodulin region. The region spanning 814–834 (AEACIKMQKTIRMWLCKRRHK) is the IQ domain. The tract at residues 835–916 (PRIDGLVKVG…EELLSALQKK (82 aa)) is three-helix bundle. The segment at 917-984 (KQQEEEAERL…EDDEKRIQAE (68 aa)) is SAH. The tract at residues 934 to 955 (EKERKRREEDEKRRRKEEEERR) is disordered. Phosphoserine is present on S1025. The tract at residues 1060–1285 (KEMSEFLSRG…ESRQARPTYA (226 aa)) is interaction with TAX1BP1 and CALCOCO2/NDP52. Positions 1116 to 1118 (RRL) are interaction with OPTN. Position 1155 is a phosphoserine (S1155). The interval 1157–1285 (QQNPAAQIPA…ESRQARPTYA (129 aa)) is interaction with TOM1.

The protein belongs to the TRAFAC class myosin-kinesin ATPase superfamily. Myosin family. Homodimer; dimerization seems to implicate the unfolding of the three-helix bundle region creating an additional calmodulin binding site, and cargo binding. Able to function as a monomer under specific conditions in vitro. Forms a complex with CFTR and DAB2 in the apical membrane of epithelial cells. Component of the DISP/DOCK7-induced septin displacement complex, at least composed of DOCK7, LRCH3 and MYO6. Binding to calmodulin through a unique insert, not found in other myosins, located in the neck region between the motor domain and the IQ domain appears to contribute to the directionality reversal. This interaction occurs only if the C-terminal lobe of calmodulin is occupied by calcium. Interaction with F-actin/ACTN1 occurs only at the apical brush border domain of the proximal tubule cells. Interacts with DAB2. In vitro, the C-terminal globular tail binds a C-terminal region of DAB2. Interacts with CFTR. Interacts with CABP5. Interacts with TOM1. Interacts with OPTN. Interacts with TAX1BP1 and CALCOCO2/NDP52. Interacts with TOM1L2. Interacts with CLIC5; may work together in a complex which also includes RDX and MYO6 to stabilize linkages between the plasma membrane and subjacent actin cytoskeleton at the base of stereocilia. Post-translationally, phosphorylation in the motor domain, induced by EGF, results in translocation of MYO6 from the cell surface to membrane ruffles and affects F-actin dynamics. Phosphorylated in vitro by p21-activated kinase (PAK). Expressed in most tissues examined including heart, brain, placenta, pancreas, spleen, thymus, prostate, testis, ovary, small intestine and colon. Highest levels in brain, pancreas, testis and small intestine. Also expressed in fetal brain and cochlea. Isoform 1 and isoform 2, containing the small insert, and isoform 4, containing neither insert, are expressed in unpolarized epithelial cells.

Its subcellular location is the golgi apparatus. The protein localises to the trans-Golgi network membrane. It is found in the nucleus. It localises to the cytoplasm. The protein resides in the perinuclear region. Its subcellular location is the membrane. The protein localises to the clathrin-coated pit. It is found in the cytoplasmic vesicle. It localises to the clathrin-coated vesicle. The protein resides in the cell projection. Its subcellular location is the filopodium. The protein localises to the ruffle membrane. It is found in the microvillus. It localises to the cytosol. The protein resides in the autophagosome. Its subcellular location is the endosome. The protein localises to the clathrin-coated vesicle membrane. Its function is as follows. Myosins are actin-based motor molecules with ATPase activity. Unconventional myosins serve in intracellular movements. Myosin 6 is a reverse-direction motor protein that moves towards the minus-end of actin filaments. Has slow rate of actin-activated ADP release due to weak ATP binding. Functions in a variety of intracellular processes such as vesicular membrane trafficking and cell migration. Required for the structural integrity of the Golgi apparatus via the p53-dependent pro-survival pathway. Appears to be involved in a very early step of clathrin-mediated endocytosis in polarized epithelial cells. Together with TOM1, mediates delivery of endocytic cargo to autophagosomes thereby promoting autophagosome maturation and driving fusion with lysosomes. Links TOM1 with autophagy receptors, such as TAX1BP1; CALCOCO2/NDP52 and OPTN. May act as a regulator of F-actin dynamics. As part of the DISP complex, may regulate the association of septins with actin and thereby regulate the actin cytoskeleton. May play a role in transporting DAB2 from the plasma membrane to specific cellular targets. May play a role in the extension and network organization of neurites. Required for structural integrity of inner ear hair cells. Required for the correct localization of CLIC5 and RDX at the stereocilium base. Modulates RNA polymerase II-dependent transcription. In Homo sapiens (Human), this protein is Unconventional myosin-VI.